Reading from the N-terminus, the 350-residue chain is D-guloside 3-dehydrogenase (350 aa).

The protein belongs to the zinc-containing alcohol dehydrogenase family. Requires Zn(2+) as cofactor.

It carries out the reaction a D-guloside + NAD(+) = a 3-dehydro-D-guloside + NADH + H(+). Its function is as follows. Catalyzes the NAD(+)-dependent oxidation of the hydroxyl group at C3 of D-gulosides leading to 3-dehydro-D-gulosides. Probably functions in a metabolic pathway that transforms D-gulosides to D-glucosides. Is also able to catalyze the reverse reactions, i.e. the NADH-dependent reduction of the oxo group at C3 of 3-dehydro-D-gulosides leading to D-gulosides. In vitro, can oxidize D-gulose and methyl beta-D-guloside, and reduce methyl alpha-3-dehydro-D-guloside and methyl beta-3-dehydro-D-guloside. However, the actual specific physiological substrates for this metabolic pathway are unknown. The sequence is that of D-guloside 3-dehydrogenase (ycjQ) from Escherichia coli (strain K12).